A 457-amino-acid chain; its full sequence is Nuclear hormone receptor family member odr-7 (457 aa).

2 disordered regions span residues 57–95 (EQPNNNVPQQPWGPFPPAFGGRPSGEQTDGNPGEFDNDA) and 230–252 (KQESSDDSTLKNLKKSDQQLQQP). The segment at residues 327–407 (LHDCQVCLST…IGMLPENVQH (81 aa)) is a DNA-binding region (nuclear receptor). 2 NR C4-type zinc fingers span residues 330-351 (CQVCLSTHANGLHFGARTCAAC) and 367-395 (CKRNQRCNNASRDGTGYRKICRSCRMKRC). The segment at 435–457 (QPSGSAAQPITVSSSESPRHTTN) is disordered.

This sequence belongs to the nuclear hormone receptor family. NR0 subfamily. Heterodimer with a partner that confers DNA binding capacity or a nuclear hormone receptor whose DNA binding it inhibits. In terms of tissue distribution, expressed predominantly in the AWA neurons.

It is found in the nucleus. Its subcellular location is the cytoplasm. The protein localises to the perinuclear region. Its function is as follows. Required for the function of one pair of chemosensory neurons called AWA neurons that are involved in chemotaxis to volatile odorants. Acts in a pathway that specifies olfactory neuronal fate. Regulates the transcription of olfactory signaling molecules such as odr-10 that specify AWA neuron identity and function. Represses the expression in AWA neurons of factors such as str-2 which specify AWC neuron identity. This Caenorhabditis elegans protein is Nuclear hormone receptor family member odr-7 (odr-7).